We begin with the raw amino-acid sequence, 237 residues long: Phosphoribosylaminoimidazole-succinocarboxamide synthase (237 aa).

It belongs to the SAICAR synthetase family.

The catalysed reaction is 5-amino-1-(5-phospho-D-ribosyl)imidazole-4-carboxylate + L-aspartate + ATP = (2S)-2-[5-amino-1-(5-phospho-beta-D-ribosyl)imidazole-4-carboxamido]succinate + ADP + phosphate + 2 H(+). It functions in the pathway purine metabolism; IMP biosynthesis via de novo pathway; 5-amino-1-(5-phospho-D-ribosyl)imidazole-4-carboxamide from 5-amino-1-(5-phospho-D-ribosyl)imidazole-4-carboxylate: step 1/2. The chain is Phosphoribosylaminoimidazole-succinocarboxamide synthase from Shigella dysenteriae serotype 1 (strain Sd197).